The primary structure comprises 225 residues: J-type co-chaperone jac1, mitochondrial (225 aa).

The transit peptide at 1 to 49 directs the protein to the mitochondrion; sequence MLKQAGNQSFRPFISFAQKSLFNRQITGNHWIFARFKFYPLNKIVNYNH. The J domain maps to 61 to 137; the sequence is NFYKQFEGDI…LTRAEYILQL (77 aa). Positions 98–100 match the HSP70 binding motif; that stretch reads HPD.

The protein belongs to the HscB family. Interacts with ssc1.

The protein localises to the mitochondrion matrix. In terms of biological role, co-chaperone required for the assembly of iron-sulfur (Fe/S) clusters in mitochondria. Stimulates the ATPase activity of the mitochondrial Hsp70 chaperone ssc1, to mediate the transfer of iron-sulfur clusters from isu1 to grx5. The protein is J-type co-chaperone jac1, mitochondrial of Schizosaccharomyces pombe (strain 972 / ATCC 24843) (Fission yeast).